We begin with the raw amino-acid sequence, 153 residues long: Glucose-6-phosphate 1-dehydrogenase (153 aa).

2 residues coordinate NADP(+): Arg-21 and Lys-120. Lys-120 contacts D-glucose 6-phosphate.

This sequence belongs to the glucose-6-phosphate dehydrogenase family.

The protein localises to the cytoplasm. The protein resides in the cytosol. It catalyses the reaction D-glucose 6-phosphate + NADP(+) = 6-phospho-D-glucono-1,5-lactone + NADPH + H(+). It participates in carbohydrate degradation; pentose phosphate pathway; D-ribulose 5-phosphate from D-glucose 6-phosphate (oxidative stage): step 1/3. Its function is as follows. Cytosolic glucose-6-phosphate dehydrogenase that catalyzes the first and rate-limiting step of the oxidative branch within the pentose phosphate pathway/shunt, an alternative route to glycolysis for the dissimilation of carbohydrates and a major source of reducing power and metabolic intermediates for fatty acid and nucleic acid biosynthetic processes. The chain is Glucose-6-phosphate 1-dehydrogenase (Zw) from Drosophila simulans (Fruit fly).